The chain runs to 72 residues: ATP synthase protein 8 (72 aa).

The chain crosses the membrane as a helical span at residues 16 to 36; it reads WTLIALFLLFSFLVVSVLPAV.

Belongs to the ATPase protein 8 family. As to quaternary structure, F-type ATPases have 2 components, CF(1) - the catalytic core - and CF(0) - the membrane proton channel.

The protein resides in the mitochondrion membrane. Its function is as follows. Mitochondrial membrane ATP synthase (F(1)F(0) ATP synthase or Complex V) produces ATP from ADP in the presence of a proton gradient across the membrane which is generated by electron transport complexes of the respiratory chain. F-type ATPases consist of two structural domains, F(1) - containing the extramembraneous catalytic core and F(0) - containing the membrane proton channel, linked together by a central stalk and a peripheral stalk. During catalysis, ATP synthesis in the catalytic domain of F(1) is coupled via a rotary mechanism of the central stalk subunits to proton translocation. Part of the complex F(0) domain. Minor subunit located with subunit a in the membrane. The polypeptide is ATP synthase protein 8 (MTATP8) (Metridium senile (Brown sea anemone)).